Consider the following 185-residue polypeptide: Ribosome-recycling factor (185 aa).

The disordered stretch occupies residues 136-159 (NEQLKSQQKDGKMSEDELKRSQDE).

It belongs to the RRF family.

It is found in the cytoplasm. In terms of biological role, responsible for the release of ribosomes from messenger RNA at the termination of protein biosynthesis. May increase the efficiency of translation by recycling ribosomes from one round of translation to another. This is Ribosome-recycling factor from Pelotomaculum thermopropionicum (strain DSM 13744 / JCM 10971 / SI).